We begin with the raw amino-acid sequence, 431 residues long: Tyrosine--tRNA ligase (431 aa).

Tyr-33 provides a ligand contact to L-tyrosine. Positions 38–47 (PTADSLHIGS) match the 'HIGH' region motif. L-tyrosine is bound by residues Tyr-172 and Gln-176. The short motif at 234–238 (KFGKS) is the 'KMSKS' region element. Lys-237 contributes to the ATP binding site. Positions 364–431 (INIVEVLNEK…KKNYFVLNVK (68 aa)) constitute an S4 RNA-binding domain.

The protein belongs to the class-I aminoacyl-tRNA synthetase family. TyrS type 1 subfamily. Homodimer.

The protein resides in the cytoplasm. It carries out the reaction tRNA(Tyr) + L-tyrosine + ATP = L-tyrosyl-tRNA(Tyr) + AMP + diphosphate + H(+). Its function is as follows. Catalyzes the attachment of tyrosine to tRNA(Tyr) in a two-step reaction: tyrosine is first activated by ATP to form Tyr-AMP and then transferred to the acceptor end of tRNA(Tyr). The polypeptide is Tyrosine--tRNA ligase (Flavobacterium psychrophilum (strain ATCC 49511 / DSM 21280 / CIP 103535 / JIP02/86)).